The primary structure comprises 484 residues: ETS translocation variant 4 (484 aa).

Residue lysine 6 forms a Glycyl lysine isopeptide (Lys-Gly) (interchain with G-Cter in SUMO2) linkage. Positions 90–115 (SPTTRIKKEPQSPRTDPALSCSRKPP) are disordered. Residue lysine 96 forms a Glycyl lysine isopeptide (Lys-Gly) (interchain with G-Cter in SUMO) linkage. Serine 101 bears the Phosphoserine mark. A Glycyl lysine isopeptide (Lys-Gly) (interchain with G-Cter in SUMO2) cross-link involves residue lysine 139. A phosphoserine mark is found at serine 140, serine 149, and serine 214. Glycyl lysine isopeptide (Lys-Gly) (interchain with G-Cter in SUMO) cross-links involve residues lysine 226 and lysine 260. Lysine 322 participates in a covalent cross-link: Glycyl lysine isopeptide (Lys-Gly) (interchain with G-Cter in SUMO2). Residues 341–421 (LQLWQFLVAL…AGERYVYKFV (81 aa)) constitute a DNA-binding region (ETS).

It belongs to the ETS family. In terms of processing, sumoylated; enhanced upon ERK/MAP kinase pathway activation, it positively regulates the transcriptional activator capacity. Sumoylation at Lys-96 probably requires phosphorylation at Ser-101. Transiently polysumoylated and desumoylated by SENP1. Sumoylation is a prerequisite to polyubiquitination which in turn increases proteasomal-mediated degradation. Probably polyubiquitinated by RNF4 and deubiquitinated by USP2. Expressed in keratinocytes.

It is found in the nucleus. In terms of biological role, transcriptional activator. May play a role in keratinocyte differentiation. (Microbial infection) Binds to the enhancer of the adenovirus E1A gene and acts as a transcriptional activator; the core-binding sequence is 5'-[AC]GGA[AT]GT-3'. This is ETS translocation variant 4 (ETV4) from Homo sapiens (Human).